The primary structure comprises 376 residues: Flap endonuclease 1 (376 aa).

Residues 1–105 are N-domain; it reads MGIKGLSKLL…GELNKRKENA (105 aa). Residue Asp34 coordinates Mg(2+). DNA is bound by residues Arg47 and Arg71. The Mg(2+) site is built by Asp87, Glu159, Glu161, Asp180, and Asp182. Residues 123–254 form an I-domain region; sequence QAKKLMKRTA…ITAFELIQQY (132 aa). Glu159 lines the DNA pocket. DNA is bound by residues Gly232 and Asp234. Asp234 is a binding site for Mg(2+). Residues 336–344 form an interaction with PCNA region; sequence AQGRLDSFF. The tract at residues 352–376 is disordered; it reads SKSEAASGVKRKKPTTKAKESRKKK. The span at 360 to 376 shows a compositional bias: basic residues; that stretch reads VKRKKPTTKAKESRKKK.

This sequence belongs to the XPG/RAD2 endonuclease family. FEN1 subfamily. Interacts with PCNA. Three molecules of FEN1 bind to one PCNA trimer with each molecule binding to one PCNA monomer. PCNA stimulates the nuclease activity without altering cleavage specificity. Requires Mg(2+) as cofactor. Phosphorylated. Phosphorylation upon DNA damage induces relocalization to the nuclear plasma.

It localises to the nucleus. It is found in the nucleolus. The protein resides in the nucleoplasm. Its subcellular location is the mitochondrion. In terms of biological role, structure-specific nuclease with 5'-flap endonuclease and 5'-3' exonuclease activities involved in DNA replication and repair. During DNA replication, cleaves the 5'-overhanging flap structure that is generated by displacement synthesis when DNA polymerase encounters the 5'-end of a downstream Okazaki fragment. It enters the flap from the 5'-end and then tracks to cleave the flap base, leaving a nick for ligation. Also involved in the long patch base excision repair (LP-BER) pathway, by cleaving within the apurinic/apyrimidinic (AP) site-terminated flap. Acts as a genome stabilization factor that prevents flaps from equilibrating into structures that lead to duplications and deletions. Also possesses 5'-3' exonuclease activity on nicked or gapped double-stranded DNA, and exhibits RNase H activity. Also involved in replication and repair of rDNA and in repairing mitochondrial DNA. The protein is Flap endonuclease 1 of Entamoeba dispar (strain ATCC PRA-260 / SAW760).